A 614-amino-acid chain; its full sequence is Phosphomethylpyrimidine synthase (614 aa).

Substrate contacts are provided by residues Asn226, Met255, Tyr284, His320, 340–342 (SRG), 381–384 (DGLR), and Glu420. His424 provides a ligand contact to Zn(2+). Residue Tyr447 coordinates substrate. A Zn(2+)-binding site is contributed by His488. Residues Cys568, Cys571, and Cys576 each contribute to the [4Fe-4S] cluster site.

The protein belongs to the ThiC family. In terms of assembly, homodimer. [4Fe-4S] cluster is required as a cofactor.

The enzyme catalyses 5-amino-1-(5-phospho-beta-D-ribosyl)imidazole + S-adenosyl-L-methionine = 4-amino-2-methyl-5-(phosphooxymethyl)pyrimidine + CO + 5'-deoxyadenosine + formate + L-methionine + 3 H(+). It functions in the pathway cofactor biosynthesis; thiamine diphosphate biosynthesis. Catalyzes the synthesis of the hydroxymethylpyrimidine phosphate (HMP-P) moiety of thiamine from aminoimidazole ribotide (AIR) in a radical S-adenosyl-L-methionine (SAM)-dependent reaction. The chain is Phosphomethylpyrimidine synthase from Acidovorax sp. (strain JS42).